We begin with the raw amino-acid sequence, 207 residues long: Ras-related protein Rab-8A (207 aa).

GTP is bound by residues S17, G18, V19, G20, K21, T22, C23, S35, S39, and T40. T22 is a binding site for Mg(2+). 2 short sequence motifs (switch) span residues 31–45 (DAFNSTFISTIGIDF) and 63–80 (DTAGQERFRTITTAYYRG). Mg(2+)-binding residues include T40 and D63. G66 contributes to the GTP binding site. T72 carries the phosphothreonine modification. GTP-binding residues include N121, K122, D124, A152, and K153. 2 positions are modified to phosphoserine: S181 and S185. C204 carries the post-translational modification Cysteine methyl ester. A lipid anchor (S-geranylgeranyl cysteine) is attached at C204. A propeptide spans 205–207 (VLL) (removed in mature form).

This sequence belongs to the small GTPase superfamily. Rab family. As to quaternary structure, interacts (GTP-bound form) with MICALL1; regulates RAB8A association with recycling endosomes. Interacts with MICALL2; competes with RAB13 and is involved in E-cadherin endocytic recycling. Interacts (GTP-bound form) with MICAL1, MICALCL, MICAL3, EHBP1 and EHBP1L1; at least in case of MICAL1, MICALCL, MICAL3 and EHBP1L1 two molecules of RAB8A can bind to one molecule of the effector protein; ternary complexes of RAB8A, RAB13 and either MICAL1 or EHBP1L1 are possible. Interacts with EHD1. Interacts with MAP4K2 and SYTL4. Interacts with SGSM1 and SGSM3. Interacts with RABIF, RIMS2, RPH3A and RPH3A. Interacts with OPTN. Interacts with RAB3IP, RAB3IP functions as guanine exchange factor (GEF). Interacts with MYO5B. Interacts with CIMAP3. Interacts with BIRC6/bruce. Interacts with OCRL. Interacts with AHI1. Interacts with DCDC1. Interacts with LRRK2; interaction facilitates phosphorylation of Thr-72. Interacts with RAB31P, GDI1, GDI2, CHM, CHML, RABGGTA, RABGGTB, TBC1D15 and INPP5B; these interactions are dependent on Thr-72 not being phosphorylated. Interacts with RILPL1 and RILPL2; these interactions are dependent on the phosphorylation of Thr-72 by LRRK2. Interacts with DZIP1; prevents inhibition by the GDP-dissociation inhibitor GDI2. Interacts (in GDP-bound form) with RAB3IP/Rabin8, RAB3IP functions as guanine exchange factor (GEF) towards RAB8A. Interacts (in GDP-bound form) with RPGR, RPGR functions as GEF towards RAB8A. The cofactor is Mg(2+). Phosphorylation of Thr-72 in the switch II region by LRRK2 prevents the association of RAB regulatory proteins, including CHM, CHML and RAB GDP dissociation inhibitors GDI1 and GDI2. Phosphorylation by LRRK2 is required for localization to stressed lysosomes.

The protein localises to the cell membrane. It is found in the golgi apparatus. It localises to the endosome membrane. The protein resides in the recycling endosome membrane. Its subcellular location is the cell projection. The protein localises to the cilium. It is found in the cytoplasmic vesicle. It localises to the phagosome membrane. The protein resides in the cytoplasm. Its subcellular location is the cytoskeleton. The protein localises to the microtubule organizing center. It is found in the centrosome. It localises to the centriole. The protein resides in the cilium basal body. Its subcellular location is the midbody. The protein localises to the lysosome. It catalyses the reaction GTP + H2O = GDP + phosphate + H(+). With respect to regulation, regulated by guanine nucleotide exchange factors (GEFs) such as RAB3IP/Rabin8 and RPGR which promote the exchange of bound GDP for free GTP, GTPase activating proteins (GAPs) which increase the GTP hydrolysis activity, and GDP dissociation inhibitors (GDIs) which inhibit the dissociation of the nucleotide from the GTPase. Activated in response to insulin. In terms of biological role, the small GTPases Rab are key regulators of intracellular membrane trafficking, from the formation of transport vesicles to their fusion with membranes. Rabs cycle between an inactive GDP-bound form and an active GTP-bound form that is able to recruit to membranes different sets of downstream effectors directly responsible for vesicle formation, movement, tethering and fusion. RAB8A is involved in polarized vesicular trafficking and neurotransmitter release. Together with RAB11A, RAB3IP, the exocyst complex, PARD3, PRKCI, ANXA2, CDC42 and DNMBP promotes transcytosis of PODXL to the apical membrane initiation sites (AMIS), apical surface formation and lumenogenesis. Regulates the compacted morphology of the Golgi. Together with MYO5B and RAB11A participates in epithelial cell polarization. Also involved in membrane trafficking to the cilium and ciliogenesis. Together with MICALL2, may also regulate adherens junction assembly. May play a role in insulin-induced transport to the plasma membrane of the glucose transporter GLUT4 and therefore play a role in glucose homeostasis. Involved in autophagy. Participates in the export of a subset of neosynthesized proteins through a Rab8-Rab10-Rab11-dependent endososomal export route. Targeted to and stabilized on stressed lysosomes through LRRK2 phosphorylation. Suppresses stress-induced lysosomal enlargement through EHBP1 and EHNP1L1 effector proteins. This is Ras-related protein Rab-8A (RAB8A) from Pongo abelii (Sumatran orangutan).